The sequence spans 255 residues: 14-3-3-like protein B (255 aa).

It belongs to the 14-3-3 family.

This Nicotiana tabacum (Common tobacco) protein is 14-3-3-like protein B.